The chain runs to 474 residues: Nuclear hormone receptor family member nhr-91 (474 aa).

The segment at 50–69 (SMTPSFSQTESPNSETDDST) is disordered. A compositionally biased stretch (polar residues) spans 51–69 (MTPSFSQTESPNSETDDST). A DNA-binding region (nuclear receptor) is located at residues 97–172 (SKLCSVCGDK…KGMLTEAVRE (76 aa)). NR C4-type zinc fingers lie at residues 100–120 (CSVCGDKSTGLHYGAATCEGC) and 136–155 (CSQDNCCEIDKQNRNRCQSC). The NR LBD domain occupies 215–474 (SGKKLIKELV…KNPRRLVFDE (260 aa)).

This sequence belongs to the nuclear hormone receptor family.

The protein localises to the nucleus. In terms of biological role, orphan nuclear receptor. The protein is Nuclear hormone receptor family member nhr-91 (nhr-91) of Caenorhabditis elegans.